The primary structure comprises 264 residues: Apolipoprotein A-I (264 aa).

An N-terminal signal peptide occupies residues 1-18 (MKAVVLTVAVFFLTGSQA). 2 repeat units span residues 67–88 (LKLLDNWDSLSSTVSKLREQIG) and 89–110 (PVTQEFWDKLEKDTVSLRQEMN). Residues 67–264 (LKLLDNWDSL…DEATKKLTTQ (198 aa)) form a 10 X approximate tandem repeats region. Met-109 is modified (methionine sulfoxide). The stretch at 111–121 (KDLEEVKLKVQ) is one 3; half-length repeat. Tandem repeats lie at residues 122-143 (PYLDEFQKRWQEDVERYRQQVE), 144-165 (PLGTELREGARQKLQELHEKLS), and 166-187 (PLGQELRDRARAHVDALRTHLA). One copy of the 7; truncated repeat lies at 188 to 207 (PYSDELRQRLAARLEALKES). Repeat 8 spans residues 208-229 (SSLADYQAKATEHLSALGEKAK). A 9; half-length repeat occupies 230 to 240 (PALEDLRQGLL). Repeat 10 spans residues 241–264 (PVLENLKMSFWSAVDEATKKLTTQ).

Belongs to the apolipoprotein A1/A4/E family. Homodimer. Interacts with APOA1BP and CLU. Component of a sperm activating protein complex (SPAP), consisting of APOA1, an immunoglobulin heavy chain, an immunoglobulin light chain and albumin. Interacts with NDRG1. Interacts with SCGB3A2. Interacts with NAXE and YJEFN3. Post-translationally, glycosylated. Palmitoylated. In terms of processing, phosphorylation sites are present in the extracellular medium.

It is found in the secreted. Functionally, participates in the reverse transport of cholesterol from tissues to the liver for excretion by promoting cholesterol efflux from tissues and by acting as a cofactor for the lecithin cholesterol acyltransferase (LCAT). As part of the SPAP complex, activates spermatozoa motility. The polypeptide is Apolipoprotein A-I (ApoA1) (Marmota monax (Woodchuck)).